The primary structure comprises 341 residues: Protein pelota homolog (341 aa).

The protein belongs to the eukaryotic release factor 1 family. Pelota subfamily. As to quaternary structure, monomer. The cofactor is a divalent metal cation.

It is found in the cytoplasm. Its function is as follows. May function in recognizing stalled ribosomes, interact with stem-loop structures in stalled mRNA molecules, and effect endonucleolytic cleavage of the mRNA. May play a role in the release non-functional ribosomes and degradation of damaged mRNAs. Has endoribonuclease activity. The polypeptide is Protein pelota homolog (Methanospirillum hungatei JF-1 (strain ATCC 27890 / DSM 864 / NBRC 100397 / JF-1)).